We begin with the raw amino-acid sequence, 132 residues long: Putative flagella-related protein F (132 aa).

Positions 1 to 18 (MGFSSTVGSVLILTTLLI) are cleaved as a signal peptide. Cys19 is subject to N-acetylcysteine. Cys19 carries S-archaeol cysteine lipidation.

It to M.jannaschii FlaF.

Its subcellular location is the archaeal flagellum. This is Putative flagella-related protein F (flaF) from Methanococcus voltae.